Here is a 548-residue protein sequence, read N- to C-terminus: Phosphoglucomutase (548 aa).

The Phosphoserine intermediate role is filled by Ser135. Residues Ser135, Asp288, Asp290, and Asp292 each coordinate Mg(2+).

It belongs to the phosphohexose mutase family. It depends on Mg(2+) as a cofactor.

The catalysed reaction is alpha-D-glucose 1-phosphate = alpha-D-glucose 6-phosphate. It functions in the pathway glycolipid metabolism; diglucosyl-diacylglycerol biosynthesis. Catalyzes the interconversion between glucose-6-phosphate and alpha-glucose-1-phosphate. This is the first step in the biosynthesis of diglucosyl-diacylglycerol (Glc2-DAG), i.e. a glycolipid found in the membrane, which is also used as a membrane anchor for lipoteichoic acid (LTA). This Staphylococcus haemolyticus (strain JCSC1435) protein is Phosphoglucomutase (pgcA).